The following is a 939-amino-acid chain: cGMP-dependent 3',5'-cyclic phosphodiesterase (939 aa).

Gly-2 carries the N-myristoyl glycine lipid modification. Residues Cys-5 and Cys-11 are each lipidated (S-palmitoyl cysteine). The disordered stretch occupies residues 16–38 (YPAARPAEPRGQQVFLKPDEPPP). Ser-116 is modified (phosphoserine). Positions 197–217 (PEAVQNTSVDASEDQKDEKGY) are disordered. GAF domains are found at residues 236-373 (ATSL…HYTG) and 408-547 (DVSV…GISI). Residues Ser-430, Asp-445, Ile-464, Tyr-487, and Thr-498 each coordinate 3',5'-cyclic GMP. Positions 577-901 (SDDEYTKLLH…EHWTKVSHKF (325 aa)) constitute a PDEase domain. The active-site Proton donor is the His-655. 4 residues coordinate Zn(2+): His-659, His-695, Asp-696, and Asp-807. Asp-696 contributes to the Mg(2+) binding site.

This sequence belongs to the cyclic nucleotide phosphodiesterase family. PDE2 subfamily. As to quaternary structure, homodimer. The cofactor is Zn(2+). It depends on Mg(2+) as a cofactor. Expressed in brain and liver (at protein level).

The protein localises to the cytoplasm. It is found in the mitochondrion matrix. The protein resides in the mitochondrion inner membrane. It localises to the mitochondrion outer membrane. Its subcellular location is the cell membrane. The enzyme catalyses a nucleoside 3',5'-cyclic phosphate + H2O = a nucleoside 5'-phosphate + H(+). It carries out the reaction 3',5'-cyclic GMP + H2O = GMP + H(+). It catalyses the reaction 3',5'-cyclic AMP + H2O = AMP + H(+). With respect to regulation, the 3',5'-cyclic-AMP phosphodiesterase activity is stimulated by 3',5'-cyclic GMP. Specifically inhibited by Bay 60-7550. CGMP-activated cyclic nucleotide phosphodiesterase with a dual-specificity for the second messengers cAMP and cGMP, which are key regulators of many important physiological processes. Has a higher efficiency with cGMP compared to cAMP. Plays a role in cell growth and migration. In terms of biological role, regulates mitochondrial cAMP levels and respiration. Involved in the regulation of mitochondria morphology/dynamics and apoptotic cell death via local modulation of cAMP/PKA signaling in the mitochondrion, including the monitoring of local cAMP levels at the outer mitochondrial membrane and of PKA-dependent phosphorylation of DNM1L. The sequence is that of cGMP-dependent 3',5'-cyclic phosphodiesterase from Mus musculus (Mouse).